Consider the following 461-residue polypeptide: LL-diaminopimelate aminotransferase, chloroplastic (461 aa).

A chloroplast-targeting transit peptide spans 1 to 45 (MSSTHQLVSSMISSSSSTFLAPSNFNLRTRNACLPMAKRVNTCKC). Substrate-binding residues include Tyr-72 and Gly-99. Pyridoxal 5'-phosphate contacts are provided by residues Tyr-129, 163-164 (AK), Tyr-187, Asn-244, Tyr-275, and 302-304 (SFS). Positions 164, 187, and 244 each coordinate substrate. Lys-305 is modified (N6-(pyridoxal phosphate)lysine). Positions 313 and 344 each coordinate pyridoxal 5'-phosphate. Residues Asn-344 and Arg-439 each coordinate substrate.

This sequence belongs to the class-I pyridoxal-phosphate-dependent aminotransferase family. LL-diaminopimelate aminotransferase subfamily. In terms of assembly, homodimer. Pyridoxal 5'-phosphate is required as a cofactor. In terms of tissue distribution, highly expressed in seedlings, roots, stems, flowers and leaves. Lower expression in siliques.

The protein localises to the plastid. Its subcellular location is the chloroplast. The catalysed reaction is (2S,6S)-2,6-diaminopimelate + 2-oxoglutarate = (S)-2,3,4,5-tetrahydrodipicolinate + L-glutamate + H2O + H(+). It functions in the pathway amino-acid biosynthesis; L-lysine biosynthesis via DAP pathway; LL-2,6-diaminopimelate from (S)-tetrahydrodipicolinate (aminotransferase route): step 1/1. Required for lysine biosynthesis. Catalyzes the direct conversion of tetrahydrodipicolinate to LL-diaminopimelate, a reaction that requires three enzymes in E.coli. Not active with meso-diaminopimelate, lysine or ornithine as substrates. This Arabidopsis thaliana (Mouse-ear cress) protein is LL-diaminopimelate aminotransferase, chloroplastic (DAP).